Consider the following 100-residue polypeptide: Aspartyl/glutamyl-tRNA(Asn/Gln) amidotransferase subunit C (100 aa).

The protein belongs to the GatC family. Heterotrimer of A, B and C subunits.

It catalyses the reaction L-glutamyl-tRNA(Gln) + L-glutamine + ATP + H2O = L-glutaminyl-tRNA(Gln) + L-glutamate + ADP + phosphate + H(+). It carries out the reaction L-aspartyl-tRNA(Asn) + L-glutamine + ATP + H2O = L-asparaginyl-tRNA(Asn) + L-glutamate + ADP + phosphate + 2 H(+). In terms of biological role, allows the formation of correctly charged Asn-tRNA(Asn) or Gln-tRNA(Gln) through the transamidation of misacylated Asp-tRNA(Asn) or Glu-tRNA(Gln) in organisms which lack either or both of asparaginyl-tRNA or glutaminyl-tRNA synthetases. The reaction takes place in the presence of glutamine and ATP through an activated phospho-Asp-tRNA(Asn) or phospho-Glu-tRNA(Gln). In Streptococcus pneumoniae serotype 19F (strain G54), this protein is Aspartyl/glutamyl-tRNA(Asn/Gln) amidotransferase subunit C.